A 334-amino-acid polypeptide reads, in one-letter code: Dual specificity mitogen-activated protein kinase kinase 6 (334 aa).

Basic residues predominate over residues 1–11 (MSQSKGKKRNP). Residues 1–34 (MSQSKGKKRNPGLKIPKEAFEQPQTSSTPPRDLD) form a disordered region. The interval 4–19 (SKGKKRNPGLKIPKEA) is d domain. One can recognise a Protein kinase domain in the interval 53 to 314 (LEPIVELGRG…YPELMQHPFF (262 aa)). ATP-binding positions include 59-67 (LGRGAYGVV) and K82. The active-site Proton acceptor is D179. S207 bears the Phosphoserine; by MAPK3 mark. The residue at position 211 (T211) is a Phosphothreonine; by MAPK3. Residues 311–334 (HPFFTLHESKATDVASFVKSILGD) form a DVD domain region.

The protein belongs to the protein kinase superfamily. STE Ser/Thr protein kinase family. MAP kinase kinase subfamily. As to quaternary structure, dimer. Interacts (via its D domain) with its substrates MAPK11, MAPK12, MAPK13 and MAPK14. Interacts (via its DVD domain) with MAP3Ks activators like MAP3K5/ASK1, MAP3K1/MEKK1, MAP3K2/MEKK2, MAP3K3/MEKK3, MAP3K4/MEKK4, MAP3K7/TAK1, MAP3K11/MLK3 and MAP3K17/TAOK2. Interacts with DCTN1. Interacts with EIF2AK2/PKR. In terms of processing, weakly autophosphorylated. Phosphorylated at Ser-207 and Thr-211 by the majority of M3Ks, such as MAP3K5/ASK1, MAP3K1/MEKK1, MAP3K2/MEKK2, MAP3K3/MEKK3, MAP3K4/MEKK4, MAP3K7/TAK1, MAP3K11/MLK3 and MAP3K17/TAOK2. Post-translationally, in response to genotoxic stress, MAP3K-phosphorylated MAP2K6 is ubiquitinated and degraded by the SCF(FBXO31) complex.

It localises to the nucleus. The protein localises to the cytoplasm. The protein resides in the cytoskeleton. The enzyme catalyses L-seryl-[protein] + ATP = O-phospho-L-seryl-[protein] + ADP + H(+). It carries out the reaction L-threonyl-[protein] + ATP = O-phospho-L-threonyl-[protein] + ADP + H(+). It catalyses the reaction L-tyrosyl-[protein] + ATP = O-phospho-L-tyrosyl-[protein] + ADP + H(+). Its activity is regulated as follows. Activated by dual phosphorylation on Ser-207 and Thr-211 in response to a variety of cellular stresses, including UV radiation, osmotic shock, hypoxia, inflammatory cytokines, interferon gamma (IFNG), and less often by growth factors. MAP2K6/MKK6 is activated by the majority of M3Ks, such as MAP3K5/ASK1, MAP3K1/MEKK1, MAP3K2/MEKK2, MAP3K3/MEKK3, MAP3K4/MEKK4, MAP3K7/TAK1, MAP3K11/MLK3 and MAP3K17/TAOK2. In terms of biological role, dual specificity protein kinase which acts as an essential component of the MAP kinase signal transduction pathway. With MAP3K3/MKK3, catalyzes the concomitant phosphorylation of a threonine and a tyrosine residue in the MAP kinases p38 MAPK11, MAPK12, MAPK13 and MAPK14 and plays an important role in the regulation of cellular responses to cytokines and all kinds of stresses. Especially, MAP2K3/MKK3 and MAP2K6/MKK6 are both essential for the activation of MAPK11 and MAPK13 induced by environmental stress, whereas MAP2K6/MKK6 is the major MAPK11 activator in response to TNF. MAP2K6/MKK6 also phosphorylates and activates PAK6. The p38 MAP kinase signal transduction pathway leads to direct activation of transcription factors. Nuclear targets of p38 MAP kinase include the transcription factors ATF2 and ELK1. Within the p38 MAPK signal transduction pathway, MAP3K6/MKK6 mediates phosphorylation of STAT4 through MAPK14 activation, and is therefore required for STAT4 activation and STAT4-regulated gene expression in response to IL-12 stimulation. The pathway is also crucial for IL-6-induced SOCS3 expression and down-regulation of IL-6-mediated gene induction; and for IFNG-dependent gene transcription. Has a role in osteoclast differentiation through NF-kappa-B transactivation by TNFSF11, and in endochondral ossification and since SOX9 is another likely downstream target of the p38 MAPK pathway. MAP2K6/MKK6 mediates apoptotic cell death in thymocytes. Acts also as a regulator for melanocytes dendricity, through the modulation of Rho family GTPases. The chain is Dual specificity mitogen-activated protein kinase kinase 6 (MAP2K6) from Bos taurus (Bovine).